A 216-amino-acid polypeptide reads, in one-letter code: Pyrrolidone-carboxylate peptidase (216 aa).

Catalysis depends on residues Glu-80, Cys-143, and His-168.

The protein belongs to the peptidase C15 family. As to quaternary structure, homotetramer.

The protein resides in the cytoplasm. The catalysed reaction is Release of an N-terminal pyroglutamyl group from a polypeptide, the second amino acid generally not being Pro.. Functionally, removes 5-oxoproline from various penultimate amino acid residues except L-proline. The sequence is that of Pyrrolidone-carboxylate peptidase from Cupriavidus pinatubonensis (strain JMP 134 / LMG 1197) (Cupriavidus necator (strain JMP 134)).